The sequence spans 899 residues: Toll-like receptor 4 (899 aa).

The signal sequence occupies residues 1–46 (MCPLQIHVLHLIQGNQKNRKGKYVNMTRQLWYILPLLFLLCHCVTS). N-linked (GlcNAc...) asparagine glycans are attached at residues Asn25, Asn75, Asn83, and Asn93. Residues 47–702 (ERRCYFSKIS…LERNCRSYTA (656 aa)) are Extracellular-facing. LRR repeat units lie at residues 83 to 103 (NESV…PDLP), 104 to 126 (RSLL…AFAR), 128 to 150 (QNLT…LTAG), 155 to 179 (LTRL…VLSD), 181 to 202 (VSLN…MRKI), 203 to 229 (HALK…YFQN), and 230 to 253 (VHGI…TFSY). Asn129, Asn137, Asn146, and Asn168 each carry an N-linked (GlcNAc...) asparagine glycan. Residues Asn237, Asn256, Asn275, and Asn313 are each glycosylated (N-linked (GlcNAc...) asparagine). LRR repeat units follow at residues 257–282 (LTHL…DLKN), 313–336 (NTSL…VLMY), 338–360 (PKTL…ALET), and 363–386 (LVNL…IFSN). Asn388, Asn432, and Asn463 each carry an N-linked (GlcNAc...) asparagine glycan. 7 LRR repeats span residues 468–493 (HYPL…VFYD), 501–524 (LEGL…FFDY), 526–549 (TGLK…EKGE), 554–577 (LLKL…ILRN), 579–601 (ISLE…LKHI), 602–624 (KGLR…VMRE), and 631–654 (SSNL…HFLR). Residue Asn516 is glycosylated (N-linked (GlcNAc...) asparagine). Asn633, Asn637, and Asn668 each carry an N-linked (GlcNAc...) asparagine glycan. Residues 703–723 (VIVLFSCVFVILLTVIVCGVV) form a helical membrane-spanning segment. The Cytoplasmic portion of the chain corresponds to 724 to 899 (YRYRWKLRYL…WRKLRDPISM (176 aa)). The region spanning 756-897 (YEFDAFISYA…IFWRKLRDPI (142 aa)) is the TIR domain.

This sequence belongs to the Toll-like receptor family. Expressed in all tissues tested. The highest expression is in the hepatopancreas, with moderate expression in the gills, and low expression in the gonads, adductor muscle, hemocytes, and mantle.

It is found in the cell membrane. May be involved in the innate immune response. The sequence is that of Toll-like receptor 4 from Pinctada imbricata (Atlantic pearl-oyster).